The primary structure comprises 414 residues: Serine hydroxymethyltransferase (414 aa).

(6S)-5,6,7,8-tetrahydrofolate is bound by residues Leu-121 and Gly-125 to Leu-127. At Lys-229 the chain carries N6-(pyridoxal phosphate)lysine.

This sequence belongs to the SHMT family. In terms of assembly, homodimer. Requires pyridoxal 5'-phosphate as cofactor.

The protein localises to the cytoplasm. The catalysed reaction is (6R)-5,10-methylene-5,6,7,8-tetrahydrofolate + glycine + H2O = (6S)-5,6,7,8-tetrahydrofolate + L-serine. It functions in the pathway one-carbon metabolism; tetrahydrofolate interconversion. The protein operates within amino-acid biosynthesis; glycine biosynthesis; glycine from L-serine: step 1/1. Its function is as follows. Catalyzes the reversible interconversion of serine and glycine with tetrahydrofolate (THF) serving as the one-carbon carrier. This reaction serves as the major source of one-carbon groups required for the biosynthesis of purines, thymidylate, methionine, and other important biomolecules. Also exhibits THF-independent aldolase activity toward beta-hydroxyamino acids, producing glycine and aldehydes, via a retro-aldol mechanism. In Verminephrobacter eiseniae (strain EF01-2), this protein is Serine hydroxymethyltransferase.